The chain runs to 175 residues: ATP synthase subunit b (175 aa).

A helical membrane pass occupies residues L20–W40.

This sequence belongs to the ATPase B chain family. In terms of assembly, F-type ATPases have 2 components, F(1) - the catalytic core - and F(0) - the membrane proton channel. F(1) has five subunits: alpha(3), beta(3), gamma(1), delta(1), epsilon(1). F(0) has four main subunits: a(1), b(2) and c(10-14). The alpha and beta chains form an alternating ring which encloses part of the gamma chain. F(1) is attached to F(0) by a central stalk formed by the gamma and epsilon chains, while a peripheral stalk is formed by the delta and b chains.

It localises to the cell inner membrane. Functionally, f(1)F(0) ATP synthase produces ATP from ADP in the presence of a proton or sodium gradient. F-type ATPases consist of two structural domains, F(1) containing the extramembraneous catalytic core and F(0) containing the membrane proton channel, linked together by a central stalk and a peripheral stalk. During catalysis, ATP synthesis in the catalytic domain of F(1) is coupled via a rotary mechanism of the central stalk subunits to proton translocation. Its function is as follows. Component of the F(0) channel, it forms part of the peripheral stalk, linking F(1) to F(0). This chain is ATP synthase subunit b, found in Chlorobium chlorochromatii (strain CaD3).